The sequence spans 95 residues: Glycophorin-C (95 aa).

Topologically, residues M1–E25 are extracellular. Residues I26–L46 form a helical; Signal-anchor for type III membrane protein membrane-spanning segment. At M47–I95 the chain is on the cytoplasmic side. 3 positions are modified to phosphoserine: S71, S78, and S89.

Belongs to the glycophorin-C family.

The protein resides in the cell membrane. This Rattus norvegicus (Rat) protein is Glycophorin-C (Gypc).